Reading from the N-terminus, the 159-residue chain is Transcriptional repressor NrdR (159 aa).

A zinc finger spans residues 3-34 (CPFCRHDDTQVVDSRVSEDGAAIRRRRRCSAC). Residues 49–139 (PFVVKKDGSR…VYRRFEDVSE (91 aa)) enclose the ATP-cone domain.

It belongs to the NrdR family. Requires Zn(2+) as cofactor.

Functionally, negatively regulates transcription of bacterial ribonucleotide reductase nrd genes and operons by binding to NrdR-boxes. In Burkholderia cenocepacia (strain ATCC BAA-245 / DSM 16553 / LMG 16656 / NCTC 13227 / J2315 / CF5610) (Burkholderia cepacia (strain J2315)), this protein is Transcriptional repressor NrdR.